The sequence spans 427 residues: F-box protein At2g16450 (427 aa).

The F-box domain maps to 1-45 (MNPSPITIDLILEILSRLPAKSVRRFHCVSKRWASIFGSPYFKEL).

In Arabidopsis thaliana (Mouse-ear cress), this protein is F-box protein At2g16450.